Reading from the N-terminus, the 324-residue chain is Glyoxylate/hydroxypyruvate reductase B (324 aa).

Active-site residues include Arg237 and Glu266. Catalysis depends on His285, which acts as the Proton donor.

Belongs to the D-isomer specific 2-hydroxyacid dehydrogenase family. GhrB subfamily. In terms of assembly, homodimer.

It is found in the cytoplasm. It catalyses the reaction glycolate + NADP(+) = glyoxylate + NADPH + H(+). The catalysed reaction is (R)-glycerate + NAD(+) = 3-hydroxypyruvate + NADH + H(+). It carries out the reaction (R)-glycerate + NADP(+) = 3-hydroxypyruvate + NADPH + H(+). Its function is as follows. Catalyzes the NADPH-dependent reduction of glyoxylate and hydroxypyruvate into glycolate and glycerate, respectively. This Shigella flexneri protein is Glyoxylate/hydroxypyruvate reductase B.